Consider the following 2525-residue polypeptide: Highly reducing polyketide synthase cm3B (2525 aa).

Over residues 1–10 (MQSDTNNSPL) the composition is skewed to polar residues. Residues 1–29 (MQSDTNNSPLSWEELRSGAASSDANSSPP) form a disordered region. The Ketosynthase family 3 (KS3) domain occupies 29–450 (PEPIAIIGMS…GTNAHVVVDA (422 aa)). Residues C202, H336, and H376 each act as for beta-ketoacyl synthase activity in the active site. Positions 560-895 (VFSGQGSQYA…FLECLGALHV (336 aa)) are malonyl-CoA:ACP transacylase (MAT) domain. Residues 949–1087 (HELLGTFAHD…GLVHAETQAA (139 aa)) are N-terminal hotdog fold. Residues 949–1252 (HELLGTFAHD…AKGVHTTTLP (304 aa)) are dehydratase (DH) domain. The PKS/mFAS DH domain maps to 949 to 1257 (HELLGTFAHD…TTTLPGDTGL (309 aa)). H981 serves as the catalytic Proton acceptor; for dehydratase activity. A C-terminal hotdog fold region spans residues 1107-1257 (VHEVTPQKLY…TTTLPGDTGL (151 aa)). D1169 functions as the Proton donor; for dehydratase activity in the catalytic mechanism. Residues 1399-1504 (LEVGAGTASA…KKLLKPGGKF (106 aa)) are methyltransferase (CMet) domain. The segment at 1799-2111 (GLLESIRWKD…AGKHTGKIVL (313 aa)) is enoyl reductase (ER) domain. Residues 2411–2489 (AQLLENISQL…ELAKIIAKES (79 aa)) enclose the Carrier domain. The tract at residues 2411-2489 (AQLLENISQL…ELAKIIAKES (79 aa)) is ketoreductase (KR) domain. An O-(pantetheine 4'-phosphoryl)serine modification is found at S2449.

Its pathway is secondary metabolite biosynthesis. Its function is as follows. Highly reducing polyketide synthase; part of the gene cluster that mediates the biosynthesis of beauveriolides I and III, cyclodepsipeptides acting as inhibitors of the acyl-CoA:cholesterol acyltransferase. The HR-PKS cm3B initiates the biosynthesis of beauveriolides by iteratively catalyzing the formation of the linear polyketide chain. The ATP-dependent acetyl-CoA ligase cm3D converts the polyketide carboxylic acid to a CoA thioester which id shuttled to the first T domain in the NRPS cm3A by the acetyltransferase cm3C. Cm3A contains 13 domains and assembles the polyketide chain, L-phenylalanine, L-alanine, and D-leucine (or D-allo-isoleucine) to form beauveriolide I (or beauveriolide III). The production of both beauveriolides I and III suggests the substrate adaptability of cm3B, using different amino acids as substrates. In Cordyceps militaris (strain CM01) (Caterpillar fungus), this protein is Highly reducing polyketide synthase cm3B.